The following is a 98-amino-acid chain: UPF0251 protein Sputcn32_0687 (98 aa).

Belongs to the UPF0251 family.

The polypeptide is UPF0251 protein Sputcn32_0687 (Shewanella putrefaciens (strain CN-32 / ATCC BAA-453)).